We begin with the raw amino-acid sequence, 1162 residues long: Integrin alpha-L (1162 aa).

Residues 1 to 23 (MSFRIAGPRLLLLGLQLFAKAWS) form the signal peptide. At 24-1088 (YNLDTRPTQS…DLIHEKEMLH (1065 aa)) the chain is on the extracellular side. FG-GAP repeat units follow at residues 28–79 (TRPT…FCQP) and 80–138 (VSLH…GPML). Cysteine 70 and cysteine 77 are disulfide-bonded. Asparagine 86 carries an N-linked (GlcNAc...) asparagine glycan. Cystine bridges form between cysteine 108/cysteine 126 and cysteine 147/cysteine 199. The VWFA domain maps to 153-325 (DLVFLFDGSQ…EKLKDLFTDL (173 aa)). 2 N-linked (GlcNAc...) asparagine glycosylation sites follow: asparagine 185 and asparagine 270. FG-GAP repeat units lie at residues 336 to 387 (NRQD…GATF), 390 to 443 (QEPL…GGRW), 444 to 504 (NQTQ…LFEM), 505 to 561 (VSEL…GLSP), and 565 to 625 (QRIQ…FSPE). Asparagine 444 carries an N-linked (GlcNAc...) asparagine glycan. Residues aspartate 466, aspartate 468, aspartate 470, glutamate 474, aspartate 528, asparagine 530, aspartate 532, aspartate 536, aspartate 588, aspartate 592, and aspartate 596 each contribute to the Ca(2+) site. The cysteines at positions 651 and 705 are disulfide-linked. 4 N-linked (GlcNAc...) asparagine glycosylation sites follow: asparagine 668, asparagine 696, asparagine 724, and asparagine 728. Cysteine 768 and cysteine 774 are joined by a disulfide. The N-linked (GlcNAc...) asparagine glycan is linked to asparagine 777. A disulfide bridge connects residues cysteine 841 and cysteine 857. N-linked (GlcNAc...) asparagine glycans are attached at residues asparagine 858, asparagine 881, asparagine 891, asparagine 900, and asparagine 928. 2 disulfide bridges follow: cysteine 994–cysteine 1010 and cysteine 1018–cysteine 1049. Asparagine 1057 carries an N-linked (GlcNAc...) asparagine glycan. Residues 1089-1109 (VYVLSGIGGLVLLFLIFLALY) form a helical membrane-spanning segment. The Cytoplasmic segment spans residues 1110–1162 (KVGFFKRNLKEKMEADGGVPNGSPPEDTDPLAVPGEETKDMGCLEPLRESDKD). Positions 1112 to 1116 (GFFKR) match the GFFKR motif motif. The segment at 1124–1162 (ADGGVPNGSPPEDTDPLAVPGEETKDMGCLEPLRESDKD) is disordered. Basic and acidic residues predominate over residues 1145 to 1162 (EETKDMGCLEPLRESDKD).

It belongs to the integrin alpha chain family. As to quaternary structure, heterodimer of an alpha and a beta subunit. The ITGAL alpha subunit associates with the ITGB2 beta subunit. Interacts with THBD. Interacts with CD226. In resting T-cells, up to 40% of surface ITGAL is constitutively phosphorylated. Phosphorylation causes conformational changes needed for ligand binding and is necessary for the activation by some physiological agents. Leukocytes.

It localises to the cell membrane. Functionally, integrin ITGAL/ITGB2 is a receptor for ICAM1, ICAM2, ICAM3 and ICAM4. Integrin ITGAL/ITGB2 is a receptor for F11R. Integrin ITGAL/ITGB2 is a receptor for the secreted form of ubiquitin-like protein ISG15; the interaction is mediated by ITGAL. Involved in a variety of immune phenomena including leukocyte-endothelial cell interaction, cytotoxic T-cell mediated killing, and antibody dependent killing by granulocytes and monocytes. Contributes to natural killer cell cytotoxicity. Involved in leukocyte adhesion and transmigration of leukocytes including T-cells and neutrophils. Acts as a platform at the immunological synapse to translate TCR engagement and density of the ITGAL ligand ICAM1 into graded adhesion. Required for generation of common lymphoid progenitor cells in bone marrow, indicating the role in lymphopoiesis. Integrin ITGAL/ITGB2 in association with ICAM3, contributes to apoptotic neutrophil phagocytosis by macrophages. In Mus musculus (Mouse), this protein is Integrin alpha-L.